We begin with the raw amino-acid sequence, 208 residues long: Uracil phosphoribosyltransferase (208 aa).

5-phospho-alpha-D-ribose 1-diphosphate contacts are provided by residues Arg78, Arg103, and 130–138; that span reads DPMLATANS. Residues Ile193 and 198 to 200 contribute to the uracil site; that span reads GDA. 5-phospho-alpha-D-ribose 1-diphosphate is bound at residue Asp199.

It belongs to the UPRTase family. The cofactor is Mg(2+).

It carries out the reaction UMP + diphosphate = 5-phospho-alpha-D-ribose 1-diphosphate + uracil. The protein operates within pyrimidine metabolism; UMP biosynthesis via salvage pathway; UMP from uracil: step 1/1. With respect to regulation, allosterically activated by GTP. Functionally, catalyzes the conversion of uracil and 5-phospho-alpha-D-ribose 1-diphosphate (PRPP) to UMP and diphosphate. This chain is Uracil phosphoribosyltransferase, found in Brucella ovis (strain ATCC 25840 / 63/290 / NCTC 10512).